The sequence spans 623 residues: Aspartate--tRNA(Asp/Asn) ligase (623 aa).

Residue glutamate 175 coordinates L-aspartate. Residues 199 to 202 (QQYK) form an aspartate region. L-aspartate contacts are provided by arginine 221 and histidine 483. 221–223 (RDE) is an ATP binding site. ATP is bound at residue glutamate 517. Arginine 524 is an L-aspartate binding site. 569-572 (GVDR) lines the ATP pocket.

The protein belongs to the class-II aminoacyl-tRNA synthetase family. Type 1 subfamily. In terms of assembly, homodimer.

It localises to the cytoplasm. The catalysed reaction is tRNA(Asx) + L-aspartate + ATP = L-aspartyl-tRNA(Asx) + AMP + diphosphate. In terms of biological role, aspartyl-tRNA synthetase with relaxed tRNA specificity since it is able to aspartylate not only its cognate tRNA(Asp) but also tRNA(Asn). Reaction proceeds in two steps: L-aspartate is first activated by ATP to form Asp-AMP and then transferred to the acceptor end of tRNA(Asp/Asn). This is Aspartate--tRNA(Asp/Asn) ligase from Xanthobacter autotrophicus (strain ATCC BAA-1158 / Py2).